A 102-amino-acid chain; its full sequence is MRMGSLISTCLSSSKASSSARINDSSTWSPPPGQHISIRTFRELRARQTSSPIWRRTETPSNGESFRSMDDLQEGDNNQPMTLTPRRLTLEVSQRLLTSLGN.

The span at 1-27 shows a compositional bias: low complexity; that stretch reads MRMGSLISTCLSSSKASSSARINDSST. Disordered stretches follow at residues 1 to 35 and 47 to 86; these read MRMG…PGQH and RQTS…LTPR.

Belongs to the geminiviridae protein AC4/C4 family.

Pathogenicity determinant. May act as a suppressor of RNA-mediated gene silencing, also known as post-transcriptional gene silencing (PTGS), a mechanism of plant viral defense that limits the accumulation of viral RNAs. The sequence is that of Protein C4 from Cynanchum acutum (Little mallow).